The following is a 124-amino-acid chain: Small ribosomal subunit protein bS6 (124 aa).

The tract at residues 99–124 (PLPAPRVMPGSEAAQQQQAEAAASAD) is disordered. A compositionally biased stretch (low complexity) spans 109–124 (SEAAQQQQAEAAASAD).

Belongs to the bacterial ribosomal protein bS6 family.

In terms of biological role, binds together with bS18 to 16S ribosomal RNA. The protein is Small ribosomal subunit protein bS6 of Synechococcus sp. (strain CC9605).